The sequence spans 237 residues: Protein GrpE (237 aa).

Disordered regions lie at residues 1-52 and 200-237; these read MSGD…RLQQ and KVSMGPGPQSGASPSSAQPNDDSTATFQGEADPAQPGV. Over residues 27–40 the composition is skewed to polar residues; the sequence is ASINSDEGQSSAQS. The segment covering 204-218 has biased composition (low complexity); sequence GPGPQSGASPSSAQP.

Belongs to the GrpE family. As to quaternary structure, homodimer.

It localises to the cytoplasm. Participates actively in the response to hyperosmotic and heat shock by preventing the aggregation of stress-denatured proteins, in association with DnaK and GrpE. It is the nucleotide exchange factor for DnaK and may function as a thermosensor. Unfolded proteins bind initially to DnaJ; upon interaction with the DnaJ-bound protein, DnaK hydrolyzes its bound ATP, resulting in the formation of a stable complex. GrpE releases ADP from DnaK; ATP binding to DnaK triggers the release of the substrate protein, thus completing the reaction cycle. Several rounds of ATP-dependent interactions between DnaJ, DnaK and GrpE are required for fully efficient folding. The chain is Protein GrpE from Prochlorococcus marinus (strain MIT 9313).